The primary structure comprises 178 residues: RNA pyrophosphohydrolase (178 aa).

The Nudix hydrolase domain maps to proline 18–alanine 171. The short motif at glycine 59–glycine 80 is the Nudix box element.

It belongs to the Nudix hydrolase family. RppH subfamily. The cofactor is a divalent metal cation.

Accelerates the degradation of transcripts by removing pyrophosphate from the 5'-end of triphosphorylated RNA, leading to a more labile monophosphorylated state that can stimulate subsequent ribonuclease cleavage. The sequence is that of RNA pyrophosphohydrolase from Brucella abortus (strain 2308).